A 673-amino-acid polypeptide reads, in one-letter code: DNA ligase (673 aa).

NAD(+) is bound by residues 38–42 (DSVYD), 87–88 (SL), and E119. K121 functions as the N6-AMP-lysine intermediate in the catalytic mechanism. R142, E179, K296, and K320 together coordinate NAD(+). C414, C417, C432, and C438 together coordinate Zn(2+). The BRCT domain maps to 595–673 (VVKSEIAGKT…EEAFLKLLKS (79 aa)).

The protein belongs to the NAD-dependent DNA ligase family. LigA subfamily. The cofactor is Mg(2+). It depends on Mn(2+) as a cofactor.

The enzyme catalyses NAD(+) + (deoxyribonucleotide)n-3'-hydroxyl + 5'-phospho-(deoxyribonucleotide)m = (deoxyribonucleotide)n+m + AMP + beta-nicotinamide D-nucleotide.. In terms of biological role, DNA ligase that catalyzes the formation of phosphodiester linkages between 5'-phosphoryl and 3'-hydroxyl groups in double-stranded DNA using NAD as a coenzyme and as the energy source for the reaction. It is essential for DNA replication and repair of damaged DNA. The chain is DNA ligase from Coxiella burnetii (strain CbuK_Q154) (Coxiella burnetii (strain Q154)).